The chain runs to 150 residues: Large ribosomal subunit protein bL9 (150 aa).

This sequence belongs to the bacterial ribosomal protein bL9 family.

Binds to the 23S rRNA. The chain is Large ribosomal subunit protein bL9 from Lactiplantibacillus plantarum (strain ATCC BAA-793 / NCIMB 8826 / WCFS1) (Lactobacillus plantarum).